A 699-amino-acid polypeptide reads, in one-letter code: 1,4-alpha-glucan-branching enzyme (699 aa).

Residues 59-60 (NE) and 88-90 (WAP) each bind substrate. Tryptophan 104 is a binding site for (1,4-alpha-D-glucosyl)n. 115–118 (DYGK) serves as a coordination point for substrate. Residue lysine 140 participates in (1,4-alpha-D-glucosyl)n binding. Tyrosine 170 is subject to Phosphotyrosine. Position 330–333 (330–333 (EVLR)) interacts with substrate. Residue aspartate 354 is the Nucleophile of the active site. Glutamate 409 acts as the Proton donor in catalysis.

The protein belongs to the glycosyl hydrolase 13 family. GlgB subfamily. Monomer.

The catalysed reaction is Transfers a segment of a (1-&gt;4)-alpha-D-glucan chain to a primary hydroxy group in a similar glucan chain.. The protein operates within glycan biosynthesis; glycogen biosynthesis. Glycogen-branching enzyme participates in the glycogen biosynthetic process along with glycogenin and glycogen synthase. Generates alpha-1,6-glucosidic branches from alpha-1,4-linked glucose chains, to increase solubility of the glycogen polymer. In Felis catus (Cat), this protein is 1,4-alpha-glucan-branching enzyme (GBE1).